Here is a 466-residue protein sequence, read N- to C-terminus: mRNA-capping enzyme subunit alpha (466 aa).

Lys67 acts as the N6-GMP-lysine intermediate in catalysis. A disordered region spans residues 408 to 466 (REQGLKNAQKQFNHQASARSSLSQQHSTEPEQSQDQPKYVDDDDDNWSDDEPDTKRQKI). Residues 413–443 (KNAQKQFNHQASARSSLSQQHSTEPEQSQDQ) show a composition bias toward polar residues. Over residues 448–459 (DDDDDNWSDDEP) the composition is skewed to acidic residues.

Belongs to the eukaryotic GTase family. As to quaternary structure, heterodimer. The mRNA-capping enzyme is composed of two separate chains alpha and beta, respectively a mRNA guanylyltransferase and an mRNA 5'-triphosphate monophosphatase.

Its subcellular location is the nucleus. It carries out the reaction a 5'-end diphospho-ribonucleoside in mRNA + GTP + H(+) = a 5'-end (5'-triphosphoguanosine)-ribonucleoside in mRNA + diphosphate. Functionally, second step of mRNA capping. Transfer of the GMP moiety of GTP to the 5'-end of RNA via an enzyme-GMP covalent reaction intermediate. This is mRNA-capping enzyme subunit alpha (CEG1) from Kluyveromyces lactis (strain ATCC 8585 / CBS 2359 / DSM 70799 / NBRC 1267 / NRRL Y-1140 / WM37) (Yeast).